We begin with the raw amino-acid sequence, 284 residues long: Pantothenate synthetase (284 aa).

30 to 37 (MGNLHEGH) lines the ATP pocket. The active-site Proton donor is histidine 37. Position 61 (glutamine 61) interacts with (R)-pantoate. Residue glutamine 61 coordinates beta-alanine. ATP is bound at residue 149 to 152 (GEKD). Glutamine 155 contributes to the (R)-pantoate binding site. ATP contacts are provided by residues valine 178 and 186–189 (LSSR).

Belongs to the pantothenate synthetase family. In terms of assembly, homodimer.

It is found in the cytoplasm. It carries out the reaction (R)-pantoate + beta-alanine + ATP = (R)-pantothenate + AMP + diphosphate + H(+). It participates in cofactor biosynthesis; (R)-pantothenate biosynthesis; (R)-pantothenate from (R)-pantoate and beta-alanine: step 1/1. Functionally, catalyzes the condensation of pantoate with beta-alanine in an ATP-dependent reaction via a pantoyl-adenylate intermediate. The protein is Pantothenate synthetase of Sodalis glossinidius (strain morsitans).